A 71-amino-acid polypeptide reads, in one-letter code: Ribosome modulation factor (71 aa).

Belongs to the ribosome modulation factor family.

It is found in the cytoplasm. In terms of biological role, during stationary phase, converts 70S ribosomes to an inactive dimeric form (100S ribosomes). The chain is Ribosome modulation factor from Pseudomonas savastanoi pv. phaseolicola (strain 1448A / Race 6) (Pseudomonas syringae pv. phaseolicola (strain 1448A / Race 6)).